The primary structure comprises 573 residues: Splicing factor U2af large subunit A (573 aa).

The disordered stretch occupies residues 1–175 (MSEFEDHEGN…KSKQRVSGFD (175 aa)). Residues 22-93 (NGGRDGEIED…ERSRDKDRDH (72 aa)) are compositionally biased toward basic and acidic residues. Residues 94-105 (RERHHRSSRHRD) show a composition bias toward basic residues. Residues 106-141 (HSRERGERRERGGRDDDDYRRSRDRDHDRRRDDRGG) are compositionally biased toward basic and acidic residues. Residues 159–169 (TRSRSPSKSKQ) are compositionally biased toward basic residues. RRM domains are found at residues 239–322 (RRVY…RPSD), 359–437 (DRIF…RANQ), and 478–564 (QVVT…YPED).

This sequence belongs to the splicing factor SR family. In terms of assembly, component of the spliceosome. Interacts with SUA. Interacts with SF1 in the nucleus.

It localises to the nucleus. Necessary for the splicing of pre-mRNA. The chain is Splicing factor U2af large subunit A from Arabidopsis thaliana (Mouse-ear cress).